The sequence spans 561 residues: Putative transport protein YbjL (561 aa).

5 helical membrane-spanning segments follow: residues 8–28, 32–52, 66–86, 94–114, and 158–178; these read LLNG…LCLG, LGSV…LLGQ, FMLF…SIFF, MLAL…GKLF, and NLSL…IVGA. RCK C-terminal domains are found at residues 200-288 and 292-373; these read RGLD…SLRN and VFDR…RIGF. Transmembrane regions (helical) follow at residues 383–403, 406–426, 447–467, 475–495, and 540–560; these read LLAF…TFQF, FSFG…LGFL, FGLM…ISNG, MLIA…LFGA, and AIAN…WPGL.

The protein belongs to the AAE transporter (TC 2.A.81) family. YbjL subfamily.

The protein localises to the cell membrane. The sequence is that of Putative transport protein YbjL from Salmonella gallinarum (strain 287/91 / NCTC 13346).